Consider the following 378-residue polypeptide: Putative F-box protein At5g51000 (378 aa).

The region spanning 1 to 47 (MSTMSDLFPDLVEEILSRVPITSLKAVKLTCKQWNDLSKDSSFTKNH) is the F-box domain.

This is Putative F-box protein At5g51000 from Arabidopsis thaliana (Mouse-ear cress).